Here is a 479-residue protein sequence, read N- to C-terminus: Probable periplasmic serine endoprotease DegP-like (479 aa).

An N-terminal signal peptide occupies residues 1–27; the sequence is MSIPRLKSYLSMFAAVLMLGQVLSAQA. Active-site charge relay system residues include histidine 117, aspartate 147, and serine 220. Substrate-binding positions include 218–220 and 275–279; these read GNS and LGVVI. 2 consecutive PDZ domains span residues 264-355 and 361-468; these read LKKD…IRNG and DVTI…LRQG. The segment at 368 to 395 is disordered; the sequence is PDDDADIGTGTGADGSAERSSNRLGVSV.

Belongs to the peptidase S1C family.

It localises to the periplasm. The catalysed reaction is Acts on substrates that are at least partially unfolded. The cleavage site P1 residue is normally between a pair of hydrophobic residues, such as Val-|-Val.. In terms of biological role, might be efficient in the degradation of transiently denatured and unfolded proteins which accumulate in the periplasm following stress conditions. The polypeptide is Probable periplasmic serine endoprotease DegP-like (Pseudomonas putida (strain W619)).